We begin with the raw amino-acid sequence, 411 residues long: Glutamate dehydrogenase 2, mitochondrial (411 aa).

The transit peptide at 1 to 18 (MNALAATSRNFRQAARLL) directs the protein to the mitochondrion. K102 is an active-site residue.

The protein belongs to the Glu/Leu/Phe/Val dehydrogenases family. As to expression, expressed in roots. Expressed ubiquitously in various tissues.

It localises to the mitochondrion. The enzyme catalyses L-glutamate + NAD(+) + H2O = 2-oxoglutarate + NH4(+) + NADH + H(+). It carries out the reaction L-glutamate + NADP(+) + H2O = 2-oxoglutarate + NH4(+) + NADPH + H(+). This chain is Glutamate dehydrogenase 2, mitochondrial (GDH2), found in Oryza sativa subsp. japonica (Rice).